The following is a 95-amino-acid chain: Large ribosomal subunit protein bL21 (95 aa).

Belongs to the bacterial ribosomal protein bL21 family. In terms of assembly, part of the 50S ribosomal subunit. Contacts protein L20.

In terms of biological role, this protein binds to 23S rRNA in the presence of protein L20. The chain is Large ribosomal subunit protein bL21 from Prosthecochloris vibrioformis (Chlorobium vibrioforme).